Reading from the N-terminus, the 207-residue chain is Large ribosomal subunit protein uL4 (207 aa).

It belongs to the universal ribosomal protein uL4 family. As to quaternary structure, part of the 50S ribosomal subunit.

Its function is as follows. One of the primary rRNA binding proteins, this protein initially binds near the 5'-end of the 23S rRNA. It is important during the early stages of 50S assembly. It makes multiple contacts with different domains of the 23S rRNA in the assembled 50S subunit and ribosome. In terms of biological role, forms part of the polypeptide exit tunnel. The protein is Large ribosomal subunit protein uL4 of Rickettsia rickettsii (strain Iowa).